We begin with the raw amino-acid sequence, 406 residues long: Purine nucleoside permease (406 aa).

The N-terminal stretch at 1-22 is a signal peptide; it reads MKLSTLFTLATTISTLTTFTIA.

Belongs to the NUP family. Predicted to be a substrate for cleavage by KEX2.

Mammalian nucleoside transport inhibitors dipyridamole and NBMPR inhibit adenosine transport by NUP. Its function is as follows. Nucleoside permease that transports adenosine and guanosine. Does not show any transport activities towards cytidine, adenine, guanine, uridine, and uracil. This chain is Purine nucleoside permease, found in Candida albicans (strain SC5314 / ATCC MYA-2876) (Yeast).